The primary structure comprises 356 residues: Protein-glutamate methylesterase/protein-glutamine glutaminase 2 (356 aa).

The 118-residue stretch at 4 to 121 (RALVVDDSAL…SQSMPEMAEE (118 aa)) folds into the Response regulatory domain. At Asp-55 the chain carries 4-aspartylphosphate. Positions 161-356 (KAAPRNILAI…MAEEIIRIIG (196 aa)) constitute a CheB-type methylesterase domain. Catalysis depends on residues Ser-173, His-200, and Asp-300.

The protein belongs to the CheB family. Post-translationally, phosphorylated by CheA. Phosphorylation of the N-terminal regulatory domain activates the methylesterase activity.

Its subcellular location is the cytoplasm. It catalyses the reaction [protein]-L-glutamate 5-O-methyl ester + H2O = L-glutamyl-[protein] + methanol + H(+). It carries out the reaction L-glutaminyl-[protein] + H2O = L-glutamyl-[protein] + NH4(+). Functionally, involved in chemotaxis. Part of a chemotaxis signal transduction system that modulates chemotaxis in response to various stimuli. Catalyzes the demethylation of specific methylglutamate residues introduced into the chemoreceptors (methyl-accepting chemotaxis proteins or MCP) by CheR. Also mediates the irreversible deamidation of specific glutamine residues to glutamic acid. This is Protein-glutamate methylesterase/protein-glutamine glutaminase 2 from Methanosarcina acetivorans (strain ATCC 35395 / DSM 2834 / JCM 12185 / C2A).